We begin with the raw amino-acid sequence, 517 residues long: Phosphatase and actin regulator 3 (517 aa).

The interval 1-24 (MDQTPPARSEPLVSGIRTPPVRRN) is disordered. A Phosphothreonine modification is found at T29. Disordered stretches follow at residues 41-247 (KKKN…RPLP) and 260-320 (ATKH…SEEN). An RPEL 1 repeat occupies 52–77 (SALEKKMAGRQGREELIKQGLLEMME). Residues 54–68 (LEKKMAGRQGREELI) are compositionally biased toward basic and acidic residues. Polar residues-rich tracts occupy residues 92–129 (QPAQ…QDEL) and 157–172 (LPTT…SGSL). The segment covering 187 to 198 (PSPPLLPTPPPK) has biased composition (pro residues). The residue at position 188 (S188) is a Phosphoserine. T194 carries the phosphothreonine modification. Positions 260 to 300 (ATKHRQDSFQGRECRGSPKKRMDVRLSRTSSMERGKERDEA) are enriched in basic and acidic residues. RPEL repeat units follow at residues 359–384 (ELLA…PRRT), 397–422 (MKLS…KQRN), and 435–460 (QRLT…IRFS). Residues 408–444 (AVEELERRNILKQRNDQTEQEERREIKQRLTRKLNQR) are a coiled coil.

Belongs to the phosphatase and actin regulator family. In terms of assembly, binds actin and PPP1CA; thus inhibiting the protein phosphatase 1 (PP1) activity. Diffusely expressed throughout the brain cortex, with highest levels in the cortex and the hippocampus and lower levels in the striatum and thalamus.

It localises to the nucleus matrix. The chain is Phosphatase and actin regulator 3 (Phactr3) from Rattus norvegicus (Rat).